Consider the following 99-residue polypeptide: Cell division topological specificity factor (99 aa).

The protein belongs to the MinE family.

In terms of biological role, prevents the cell division inhibition by proteins MinC and MinD at internal division sites while permitting inhibition at polar sites. This ensures cell division at the proper site by restricting the formation of a division septum at the midpoint of the long axis of the cell. The polypeptide is Cell division topological specificity factor (Tolumonas auensis (strain DSM 9187 / NBRC 110442 / TA 4)).